The primary structure comprises 361 residues: 3-dehydroquinate synthase (361 aa).

NAD(+) contacts are provided by residues 71-76 (DGEQFK), 105-109 (GVIGD), 129-130 (TT), lysine 142, lysine 151, and 169-172 (CLQT). The Zn(2+) site is built by glutamate 184, histidine 247, and histidine 264.

Belongs to the sugar phosphate cyclases superfamily. Dehydroquinate synthase family. Co(2+) is required as a cofactor. The cofactor is Zn(2+). It depends on NAD(+) as a cofactor.

The protein localises to the cytoplasm. The catalysed reaction is 7-phospho-2-dehydro-3-deoxy-D-arabino-heptonate = 3-dehydroquinate + phosphate. It participates in metabolic intermediate biosynthesis; chorismate biosynthesis; chorismate from D-erythrose 4-phosphate and phosphoenolpyruvate: step 2/7. Its function is as follows. Catalyzes the conversion of 3-deoxy-D-arabino-heptulosonate 7-phosphate (DAHP) to dehydroquinate (DHQ). In Edwardsiella ictaluri (strain 93-146), this protein is 3-dehydroquinate synthase.